We begin with the raw amino-acid sequence, 155 residues long: Superoxide dismutase [Cu-Zn] (155 aa).

3 residues coordinate Cu cation: H47, H49, and H64. C58 and C147 are disulfide-bonded. 4 residues coordinate Zn(2+): H64, H72, H81, and D84. Residue H121 coordinates Cu cation. R144 provides a ligand contact to substrate.

The protein belongs to the Cu-Zn superoxide dismutase family. Homodimer. Cu cation is required as a cofactor. It depends on Zn(2+) as a cofactor.

The protein resides in the cytoplasm. The enzyme catalyses 2 superoxide + 2 H(+) = H2O2 + O2. Destroys radicals which are normally produced within the cells and which are toxic to biological systems. This is Superoxide dismutase [Cu-Zn] (SOD1) from Kluyveromyces lactis (strain ATCC 8585 / CBS 2359 / DSM 70799 / NBRC 1267 / NRRL Y-1140 / WM37) (Yeast).